The sequence spans 359 residues: 2-epi-5-epi-valiolone 7-kinase (359 aa).

The disordered stretch occupies residues 28-48 (GGLGEVHTTPSPGHARRPGAG).

It belongs to the ROK (NagC/XylR) family.

The catalysed reaction is 2-epi-5-epi-valiolone + ATP = 2-epi-5-epi-valiolone 7-phosphate + ADP + H(+). Catalyzes the conversion of 2-epi-5-epi-valiolone to 2-epi-5-epi-valiolone 7-phosphate. Involved in the biosynthesis of the acarviose moiety of the alpha-glucosidase inhibitor acarbose. This is 2-epi-5-epi-valiolone 7-kinase from Actinoplanes sp. (strain ATCC 31044 / CBS 674.73 / SE50/110).